Here is a 147-residue protein sequence, read N- to C-terminus: 3-dehydroquinate dehydratase (147 aa).

Residue Tyr-22 is the Proton acceptor of the active site. Residues Asn-76, His-82, and Asp-89 each contribute to the substrate site. Residue His-102 is the Proton donor of the active site. Residues 103–104 and Arg-113 contribute to the substrate site; that span reads IS.

This sequence belongs to the type-II 3-dehydroquinase family. As to quaternary structure, homododecamer.

The enzyme catalyses 3-dehydroquinate = 3-dehydroshikimate + H2O. It participates in metabolic intermediate biosynthesis; chorismate biosynthesis; chorismate from D-erythrose 4-phosphate and phosphoenolpyruvate: step 3/7. In terms of biological role, catalyzes a trans-dehydration via an enolate intermediate. This chain is 3-dehydroquinate dehydratase, found in Fusobacterium nucleatum subsp. nucleatum (strain ATCC 25586 / DSM 15643 / BCRC 10681 / CIP 101130 / JCM 8532 / KCTC 2640 / LMG 13131 / VPI 4355).